The following is a 250-amino-acid chain: uncharacterized protein (250 aa).

2 disordered regions span residues Asn85–Pro107 and Glu158–Pro198. The span at Pro167–Gln176 shows a compositional bias: low complexity.

This is an uncharacterized protein from Mycoplasma pneumoniae (strain ATCC 29342 / M129 / Subtype 1) (Mycoplasmoides pneumoniae).